Consider the following 277-residue polypeptide: Bifunctional protein FolD (277 aa).

NADP(+)-binding positions include 164–166 (GRS), Ser-189, and Val-230.

Belongs to the tetrahydrofolate dehydrogenase/cyclohydrolase family. In terms of assembly, homodimer.

The enzyme catalyses (6R)-5,10-methylene-5,6,7,8-tetrahydrofolate + NADP(+) = (6R)-5,10-methenyltetrahydrofolate + NADPH. It catalyses the reaction (6R)-5,10-methenyltetrahydrofolate + H2O = (6R)-10-formyltetrahydrofolate + H(+). It functions in the pathway one-carbon metabolism; tetrahydrofolate interconversion. Its function is as follows. Catalyzes the oxidation of 5,10-methylenetetrahydrofolate to 5,10-methenyltetrahydrofolate and then the hydrolysis of 5,10-methenyltetrahydrofolate to 10-formyltetrahydrofolate. The sequence is that of Bifunctional protein FolD from Exiguobacterium sibiricum (strain DSM 17290 / CCUG 55495 / CIP 109462 / JCM 13490 / 255-15).